A 462-amino-acid chain; its full sequence is Transcription factor-like protein EUC1 (462 aa).

2 disordered regions span residues 11–43 (GFGG…TTSP) and 66–97 (RPTD…GRIK). Residues S17 and S23 each carry the phosphoserine modification. Residues 26–35 (DSERRNHDLG) show a composition bias toward basic and acidic residues. The segment at 81–140 (SASATEPTNRIGPGRIKETPETNFNAFLIAQLTRMEEQNANLKEEISLMKKEQELFFLEN) is homodimerization region. Residues 105–135 (NAFLIAQLTRMEEQNANLKEEISLMKKEQEL) are a coiled coil. 2 disordered regions span residues 190–214 (QEAA…STNW) and 226–289 (GDPR…RNRR). Residues 197-214 (NPSTSTQAHQSQSRSTNW) are compositionally biased toward polar residues. K231 is covalently cross-linked (Glycyl lysine isopeptide (Lys-Gly) (interchain with G-Cter in SUMO)). Residues S237 and S249 each carry the phosphoserine modification. Residues 240 to 251 (ENGEYDGNESDE) are compositionally biased toward acidic residues. The segment covering 252–282 (NATTRNLPLNNPDSVSNADDSNNQLDGTGNE) has biased composition (polar residues). The residue at position 254 (T254) is a Phosphothreonine. A GCR1 DNA-binding region region spans residues 296 to 385 (YKLNRAIQNV…QAIKVVENIR (90 aa)). A compositionally biased stretch (polar residues) spans 441–455 (SLQQPHSIPNSSTGT). Residues 441–462 (SLQQPHSIPNSSTGTPEHDQDT) are disordered.

As to quaternary structure, homodimer. Interacts with SLX5. In terms of processing, sumoylated at Lys-231 and subsequently ubiquitinated by the SUMO-targeted ubiquitin ligase (STUbL) complex SLX5/SLX8.

It localises to the chromosome. Functionally, transcription factor-like protein that binds to specific DNA motifs called ub-HS-motif associated with several locations where proteins other than histone H2B are ubiquitinated (ub-hotspots). Ubiquitination at these sites depends on the SUMO-targeted ubiquitin ligase (STUbL) complex SLX5/SLX8 and protein turnover on the CDC48 segregase. UBC9, SIZ1, or SIZ2 sumoylate DNA-bound EUC1 to stabilize its DNA-binding. Sumoylated EUC1 acts a cofactor required for the recruitment of the SLX5/SLX8 STUbL complex via specific contacts between EUC1 and SLX5, as well as an additional SUMO-mediated interaction. SLX5/SLX8 then ubiquitinates EUC1 and presumably other targets at ub-hotspots, and the CDC48/UFD1/NPL4 complex, together with UBX4 and UBX5, removes Lys-48-linked ubiquitinated proteins from chromatin. Ubiquitinated proteins could be either degraded by the proteasome or recycled by deubiquitination. EUC1 itself does not seem to underlie extensive turnover, as it is a very stable protein. EUC1 is able to act as a transcription factor, but its function at ub-hotspots does not seem to depend on this ability. EUC1-mediated ub-hotspots are crucial during stress responses when gene expression control is impaired. The polypeptide is Transcription factor-like protein EUC1 (Saccharomyces cerevisiae (strain ATCC 204508 / S288c) (Baker's yeast)).